A 112-amino-acid polypeptide reads, in one-letter code: UPF0145 protein Acid_4599 (112 aa).

Belongs to the UPF0145 family.

This is UPF0145 protein Acid_4599 from Solibacter usitatus (strain Ellin6076).